A 2767-amino-acid chain; its full sequence is Serine/threonine-protein kinase ATM (2767 aa).

In terms of domain architecture, FAT spans 1713–2317 (NVVMASNHCQ…FYQLYPLVFA (605 aa)). The PI3K/PI4K catalytic domain occupies 2419–2734 (WTNETTQCGG…KLDGREAGTM (316 aa)). A G-loop region spans residues 2425-2431 (QCGGLNA). The tract at residues 2601–2609 (GLGDRHTQN) is catalytic loop. Positions 2621 to 2645 (HIDFGIAFEQGKIQTTPETVPFRLT) are activation loop. One can recognise an FATC domain in the interval 2735 to 2767 (GDSNVEAQVERLINEATLPSNLCMLFPGWDPHL).

The protein belongs to the PI3/PI4-kinase family. ATM subfamily.

It localises to the nucleus. The protein resides in the chromosome. Its subcellular location is the telomere. The enzyme catalyses L-seryl-[protein] + ATP = O-phospho-L-seryl-[protein] + ADP + H(+). It carries out the reaction L-threonyl-[protein] + ATP = O-phospho-L-threonyl-[protein] + ADP + H(+). Serine/threonine-protein kinase which recognizes the substrate consensus sequence [ST]-Q. Required to suppress spontaneous apoptosis of proliferating cells during development, and for their proper differentiation. Required for female fertility. Protects telomeres from fusion, maybe by recruiting or maintaining chromatin-modifying complexes such as Su(var)205/HP1. May activate checkpoint signaling in response to DNA double-stranded breaks induced by low-dose ionizing radiation. May phosphorylate histone H2AV. This chain is Serine/threonine-protein kinase ATM (tefu), found in Drosophila melanogaster (Fruit fly).